Consider the following 1193-residue polypeptide: MWRVKKLSLSLSPSPQTGKPSMRTPLRELTLQPGALTNSGKRSPACSSLTPSLCKLGLQEGSNNSSPVDFVNNKRTDLSSEHFSHSSKWLETCQHESDEQPLDPIPQISSTPKTSEEAVDPLGNYMVKTIVLVPSPLGQQQDMIFEARLDTMAETNSISLNGPLRTDDLVREEVAPCMGDRFSEVAAVSEKPIFQESPSHLLEESPPNPCSEQLHCSKESLSSRTEAVREDLVPSESNAFLPSSVLWLSPSTALAADFRVNHVDPEEEIVEHGAMEEREMRFPTHPKESETEDQALVSSVEDILSTCLTPNLVEMESQEAPGPAVEDVGRILGSDTESWMSPLAWLEKGVNTSVMLENLRQSLSLPSMLRDAAIGTTPFSTCSVGTWFTPSAPQEKSTNTSQTGLVGTKHSTSETEQLLCGRPPDLTALSRHDLEDNLLSSLVILEVLSRQLRDWKSQLAVPHPETQDSSTQTDTSHSGITNKLQHLKESHEMGQALQQARNVMQSWVLISKELISLLHLSLLHLEEDKTTVSQESRRAETLVCCCFDLLKKLRAKLQSLKAEREEARHREEMALRGKDAAEIVLEAFCAHASQRISQLEQDLASMREFRGLLKDAQTQLVGLHAKQEELVQQTVSLTSTLQQDWRSMQLDYTTWTALLSRSRQLTEKLTVKSQQALQERDVAIEEKQEVSRVLEQVSAQLEECKGQTEQLELENSRLATDLRAQLQILANMDSQLKELQSQHTHCAQDLAMKDELLCQLTQSNEEQAAQWQKEEMALKHMQAELQQQQAVLAKEVRDLKETLEFADQENQVAHLELGQVECQLKTTLEVLRERSLQCENLKDTVENLTAKLASTIADNQEQDLEKTRQYSQKLGLLTEQLQSLTLFLQTKLKEKTEQETLLLSTACPPTQEHPLPNDRTFLGSILTAVADEEPESTPVPLLGSDKSAFTRVASMVSLQPAETPGMEESLAEMSIMTTELQSLCSLLQESKEEAIRTLQRKICELQARLQAQEEQHQEVQKAKEADIEKLNQALCLRYKNEKELQEVIQQQNEKILEQIDKSGELISLREEVTHLTRSLRRAETETKVLQEALAGQLDSNCQPMATNWIQEKVWLSQEVDKLRVMFLEMKNEKEKLMIKFQSHRNILEENLRRSDKELEKLDDIVQHIYKTLLSIPEVVRGCKELQGLLEFLS.

Residues 1–48 (MWRVKKLSLSLSPSPQTGKPSMRTPLRELTLQPGALTNSGKRSPACSS) are disordered. Ser-12, Ser-14, Ser-43, Ser-62, and Ser-66 each carry phosphoserine. Over residues 35-48 (ALTNSGKRSPACSS) the composition is skewed to polar residues. The segment at 96–117 (ESDEQPLDPIPQISSTPKTSEE) is disordered. Residue Thr-111 is modified to Phosphothreonine; by GSK3-beta. 3 positions are modified to phosphoserine: Ser-135, Ser-159, and Ser-334. Thr-336 bears the Phosphothreonine mark. Phosphoserine occurs at positions 341, 353, and 362. Positions 390-405 (PSAPQEKSTNTSQTGL) are enriched in polar residues. The disordered stretch occupies residues 390–416 (PSAPQEKSTNTSQTGLVGTKHSTSETE). The interaction with KNSTRN stretch occupies residues 482 to 850 (NKLQHLKESH…LKDTVENLTA (369 aa)). 2 coiled-coil regions span residues 545-608 (CCFD…SMRE) and 759-868 (QLTQ…EKTR). Thr-937 is modified (phosphothreonine; by GSK3-beta). At Ser-974 the chain carries Phosphoserine; by GSK3-beta. Thr-978 carries the phosphothreonine; by GSK3-beta modification. A coiled-coil region spans residues 979–1174 (ELQSLCSLLQ…VQHIYKTLLS (196 aa)).

Homodimer, with a globular head domain and a long stalk. Homooligomer; the globular head domains associate, resulting in aster-like structures. Binds to microtubules in the mitotic spindle. Interacts with DCLRE1B/Apollo. Part of an astrin (SPAG5)-kinastrin (SKAP) complex containing KNSTRN, SPAG5, PLK1, DYNLL1 and SGO2. Interacts with KNSTRN. Interacts with RPTOR; this interaction competes with RPTOR binding to MTOR, resulting in decreased mTORC1 formation. Interacts with G3BP1. The complex formed with G3BP1 AND RPTOR is increased by oxidative stress. Interacts with OSBPL8, PCM1 and CDK5RAP2. Interacts (via C-terminus) with NUMA1 (via C-terminus); this interaction promotes the recruitment of SPAG5 to the microtubules at spindle poles in a dynein-dynactin-dependent manner. Interacts with DYNLL1. Phosphorylated by AURKA. As to expression, highly expressed in testis. Detected at low levels in placenta, liver, pancreas, thymus and colon.

It is found in the cytoplasm. It localises to the cytoskeleton. The protein localises to the spindle. Its subcellular location is the spindle pole. The protein resides in the chromosome. It is found in the centromere. It localises to the kinetochore. The protein localises to the midbody. Its subcellular location is the microtubule organizing center. The protein resides in the centrosome. It is found in the cytoplasmic granule. It localises to the centriolar satellite. In terms of biological role, essential component of the mitotic spindle required for normal chromosome segregation and progression into anaphase. Required for chromosome alignment, normal timing of sister chromatid segregation, and maintenance of spindle pole architecture. In complex with SKAP, promotes stable microtubule-kinetochore attachments. May contribute to the regulation of separase activity. May regulate AURKA localization to mitotic spindle, but not to centrosomes and CCNB1 localization to both mitotic spindle and centrosomes. Involved in centriole duplication. Required for CDK5RAP2, CEP152, WDR62 and CEP63 centrosomal localization and promotes the centrosomal localization of CDK2. In non-mitotic cells, upon stress induction, inhibits mammalian target of rapamycin complex 1 (mTORC1) association and recruits the mTORC1 component RPTOR to stress granules (SGs), thereby preventing mTORC1 hyperactivation-induced apoptosis. May enhance GSK3B-mediated phosphorylation of other substrates, such as MAPT/TAU. The polypeptide is Sperm-associated antigen 5 (SPAG5) (Homo sapiens (Human)).